We begin with the raw amino-acid sequence, 274 residues long: Ribosomal RNA small subunit methyltransferase A (274 aa).

S-adenosyl-L-methionine is bound by residues His15, Leu17, Gly42, Glu64, Asp89, and Asn109.

This sequence belongs to the class I-like SAM-binding methyltransferase superfamily. rRNA adenine N(6)-methyltransferase family. RsmA subfamily.

It is found in the cytoplasm. It catalyses the reaction adenosine(1518)/adenosine(1519) in 16S rRNA + 4 S-adenosyl-L-methionine = N(6)-dimethyladenosine(1518)/N(6)-dimethyladenosine(1519) in 16S rRNA + 4 S-adenosyl-L-homocysteine + 4 H(+). Its function is as follows. Specifically dimethylates two adjacent adenosines (A1518 and A1519) in the loop of a conserved hairpin near the 3'-end of 16S rRNA in the 30S particle. May play a critical role in biogenesis of 30S subunits. The protein is Ribosomal RNA small subunit methyltransferase A of Synechococcus sp. (strain CC9605).